Consider the following 447-residue polypeptide: BAG family molecular chaperone regulator 5 (447 aa).

BAG domains lie at serine 9–alanine 86, glutamine 95–methionine 167, serine 182–glutamate 260, serine 275–glutamate 350, and proline 365–serine 442.

Binds to the ATPase domain of HSP/HSP70 chaperones. Binds PRKN. Interacts with HSPA8. Interacts with JPH2.

Functionally, co-chaperone for HSP/HSP70 proteins. It functions as a nucleotide-exchange factor promoting the release of ADP from HSP70, thereby activating HSP70-mediated protein refolding. Has an essential role in maintaining proteostasis at junctional membrane complexes (JMC), where it may function as a scaffold between the HSPA8 chaperone and JMC proteins enabling correct, HSPA8-dependent JMC protein folding. Inhibits both auto-ubiquitination of PRKN and ubiquitination of target proteins by PRKN. The chain is BAG family molecular chaperone regulator 5 (Bag5) from Mus musculus (Mouse).